We begin with the raw amino-acid sequence, 354 residues long: S-adenosylmethionine-dependent nucleotide dehydratase RSAD2 (354 aa).

One can recognise a Radical SAM core domain in the interval 62-282 (AMTPTSVNYH…LDRHSSISCL (221 aa)). Cys76, Cys80, and Cys83 together coordinate [4Fe-4S] cluster.

This sequence belongs to the radical SAM superfamily. RSAD2 family. Requires [4Fe-4S] cluster as cofactor. As to expression, constitutively expressed in spleen, head kidney and trunk kidney. Following viral infection, detected in most organs including liver, gill, intestine, heart, muscle and brain.

It is found in the endoplasmic reticulum membrane. Functionally, interferon-inducible iron-sulfur (4FE-4S) cluster-binding antiviral protein which plays a major role in the cell antiviral state induced by type I and type II interferon. The chain is S-adenosylmethionine-dependent nucleotide dehydratase RSAD2 from Siniperca chuatsi (Mandarin fish).